The primary structure comprises 148 residues: 3-dehydroquinate dehydratase (148 aa).

Tyr-23 (proton acceptor) is an active-site residue. Substrate contacts are provided by Asn-75, His-81, and Asp-88. His-101 (proton donor) is an active-site residue. Residues 102–103 (LS) and Arg-112 each bind substrate.

Belongs to the type-II 3-dehydroquinase family. As to quaternary structure, homododecamer.

It catalyses the reaction 3-dehydroquinate = 3-dehydroshikimate + H2O. The protein operates within metabolic intermediate biosynthesis; chorismate biosynthesis; chorismate from D-erythrose 4-phosphate and phosphoenolpyruvate: step 3/7. In terms of biological role, catalyzes a trans-dehydration via an enolate intermediate. This Xanthomonas campestris pv. campestris (strain 8004) protein is 3-dehydroquinate dehydratase.